The sequence spans 229 residues: Cytochrome c oxidase assembly factor 7 (229 aa).

5 Sel1-like repeats span residues 34 to 66 (PEGC…EVNA), 68 to 104 (AQSC…NTQG), 108 to 145 (VDAC…EGGF), 146 to 182 (APSC…DLGH), and 183 to 218 (VWGC…DLHG). Residues 197–229 (DGTDKDEQRAEELKNRAKDLHGQEKERQLKFGE) are disordered.

Belongs to the hcp beta-lactamase family.

Its subcellular location is the mitochondrion intermembrane space. Functionally, may be required for assembly of mitochondrial respiratory chain complexes. The polypeptide is Cytochrome c oxidase assembly factor 7 (coa7) (Danio rerio (Zebrafish)).